Reading from the N-terminus, the 945-residue chain is MIHSNEPLPYAIEYAKSGRSNCKTCKKNIALDQLRMSMNRPSTFFDGNMDSWFHYNCFWIKMIRGRDDINISSIRGVDWLRWEDQEKLRQEIQHFKTASPPTLTPLCSTTTVILSTIKTEKSLSNRGKCGKCGQNFERGEIKAHNKGKANHFKCFLQEFDKISGTVEDIPGWADYEENFKIKAVGEYVEALAAKRRSTEPATPASASPTPPEAETPVLSAEGSPESSNKRPASSEIIEIDGEGNPDENDFAKKRRMKKEARLMEVQKKRMKKQSDLLWEYRQIFERMPYTDKISILRENEQDIPEGHDPTAQVIERLVDNALFGCPIICQTCSNGKIVYNSSCRTYVCTGYATEYSKCTYESKNPIRTPFEVSHRLTEKHKLQDIVFNQMSERLYIGEEDGESVVKIDKRKSKGGTRGEQFIYAAEAFDSTNNVPIKVGDLTSTNTHIIKKGTVVDAKFALADRCHVFKNEIDGSLYQATLSFTDLTQNKNSYYKIQLLKDDQRENYYVFRSWGRVGTEVGGNKHESYSNSNEAILKFQDVFHEKTKNDWIYRKHFRKMPGMFSYVETDYSEFAQITDTEITPGSKTLLPKSVKEVVMSIFDVENMKSALKSFEMDVNKMPLGRLSHNQINLAFEVLNDISDLLVKLPIDASRILDFSNKFYTIIPHNFGMRVPEPIDSFHKIKEKNNMLNALLDIKFAYDQISGGDVPASTSLGIDPVDINYQKLKCIMEPLQQGCDDWNMIHQYLKNTHGATHDLKVELIDILKLNRDNESSKFKRHIGNRRLLWHGSGKMNFAGILGQGLRIAPPEAPVSGYMFGKGVYFADMFSKSFFYCRANAKEEAYLLLCDVALGNVQQLMASKNVSRQTLPAGFQSVQGLGRQCPREIGSYNHPDGYTIPLGLTYMQLQGKQDVDYHLLYNEFIVYDVDQIQLKYLVRVKMHHARHL.

The PARP-type 1 zinc-finger motif lies at 10–96 (YAIEYAKSGR…KLRQEIQHFK (87 aa)). Zn(2+) contacts are provided by cysteine 22, cysteine 25, histidine 54, and cysteine 57. The PARP-type 2; degenerate zinc-finger motif lies at 117-183 (IKTEKSLSNR…DYEENFKIKA (67 aa)). Residues 195-251 (RRSTEPATPASASPTPPEAETPVLSAEGSPESSNKRPASSEIIEIDGEGNPDENDFA) are disordered. A compositionally biased stretch (acidic residues) spans 237-248 (IEIDGEGNPDEN). The PADR1 zinc-binding domain occupies 258–397 (KEARLMEVQK…NQMSERLYIG (140 aa)). The interval 324 to 369 (GCPIICQTCSNGKIVYNSSCRTYVCTGYATEYSKCTYESKNPIRTP) is zinc ribbon. Residues cysteine 329, cysteine 332, cysteine 348, and cysteine 358 each contribute to the Zn(2+) site. The 100-residue stretch at 464–563 (RCHVFKNEID…KHFRKMPGMF (100 aa)) folds into the WGR domain. The region spanning 586 to 704 (KTLLPKSVKE…DIKFAYDQIS (119 aa)) is the PARP alpha-helical domain. Residues 717–945 (DPVDINYQKL…RVKMHHARHL (229 aa)) enclose the PARP catalytic domain.

Belongs to the ARTD/PARP family.

The protein resides in the nucleus. It catalyses the reaction NAD(+) + (ADP-D-ribosyl)n-acceptor = nicotinamide + (ADP-D-ribosyl)n+1-acceptor + H(+).. The enzyme catalyses L-aspartyl-[protein] + NAD(+) = 4-O-(ADP-D-ribosyl)-L-aspartyl-[protein] + nicotinamide. It carries out the reaction L-glutamyl-[protein] + NAD(+) = 5-O-(ADP-D-ribosyl)-L-glutamyl-[protein] + nicotinamide. With respect to regulation, inhibited by N-(6-oxo-5,6-dihydrophenanthridin-2-yl)-N,N-dimethylacetamide HCl (PJ34), 1,5-dihydroxyisoquinoline (DHQ) and 3-aminobenzamide (3AB). Poly[ADP-ribose] polymerase modifies various nuclear proteins by poly(ADP-ribosyl)ation, a post-translational modification synthesized after DNA damage that appears as an obligatory step in a detection/signaling pathway leading to the reparation of DNA strand breaks and programmed cell death. Involved in protection of the genome against mutations. This is Poly [ADP-ribose] polymerase 1 from Caenorhabditis elegans.